A 720-amino-acid chain; its full sequence is MCGIFGYCNFLIEKTRGEIIDTLIEGLQALEYKEYDSSGISIQGDELKSLNIYKQTGKISSLKEEIDLYNLNKNLPFISHCGIAHTRRATHGGLRRANCHPHNSDPSNEFVVVHNGVITNFANLKALLVAKGYVFKSDTDTECIPKLYKHIYDTSIELGYNLDFHVLTNLVLKELEGSYGLLCTSSHFPDEVVAARKGSPLVIGVKGKTDMDVNFVEVEYLDQEEDYLKLNTQTKSSGNVLAAAPVKYNTCLRKSPPLRSQYLRNSTTSTFNHGSSTETPAENGLPRPMEFYLSSDCASLARYVSKVVYLEDNDTAHIYDGELHIHCSKIGSEDFSFRTVQKLELELSKIKKGPYDNFMQKEIYEQCETTKNVMRGRVDAFTNRVVLGGLENWLTELRRAKRIIMIASKSSFHSCLAARPIFEELMEVPVNVELALDFVDRNCCIFRNDVCIFVSRSGETTDTINALNYCIKKEAVTIGVVNCSGSSISRFTHCGVHTNTGPEKGIATTKSYTSQYIALVMIALWMSEDLVSKIERRKEIIQALTIVPSQIKEVLELEPLIIELCDKKLKQHDTFLLLGRGYQFASALEGASKMKEISYVHSESILTDELGHRVLAVTSDNPPIIAFATKDAFSPKIASCIDQIIERKGNPIIICNKGHKIWEQDKQKGNVVTLEVPQTVDCLQGILNVIPLQLISYWLAIKKDIGVDLPRDSAMSAPDI.

The Nucleophile; for GATase activity role is filled by cysteine 2. Residues 2–321 (CGIFGYCNFL…DNDTAHIYDG (320 aa)) form the Glutamine amidotransferase type-2 domain. The segment covering 266-280 (STTSTFNHGSSTETP) has biased composition (polar residues). The interval 266 to 285 (STTSTFNHGSSTETPAENGL) is disordered. 2 consecutive SIS domains span residues 393–532 (WLTE…DLVS) and 565–710 (CDKK…VDLP).

It carries out the reaction D-fructose 6-phosphate + L-glutamine = D-glucosamine 6-phosphate + L-glutamate. The protein operates within nucleotide-sugar biosynthesis; UDP-N-acetyl-alpha-D-glucosamine biosynthesis; alpha-D-glucosamine 6-phosphate from D-fructose 6-phosphate: step 1/1. In terms of biological role, involved in amino sugar synthesis (formation of chitin, supplies the amino sugars of asparagine-linked oligosaccharides of glycoproteins). The polypeptide is Putative glutamine--fructose-6-phosphate aminotransferase [isomerizing] (Saccharomyces cerevisiae (strain JAY291) (Baker's yeast)).